The primary structure comprises 406 residues: MTTPANAQNASKTWELSLYELHRTPQEAIMDGTEIAVSPRSLHSELMCPICLDMLKNTMTTKECLHRFCSDCIVTALRSGNKECPTCRKKLVSKRSLRPDPNFDALISKIYPSREEYEAHQDRVLIRLSRLHNQQALSSSIEEGLRMQAMHRAQRVRRPIPGSDQTTTMSGGEGEPGEGEGDGEDVSSDSAPDSAPGPAPKRPRGGGAGGSSVGTGGGGTGGVGGGAGSEDSGDRGGTLGGGTLGPPSPPGAPSPPEPGGEIELVFRPHPLLVEKGEYCQTRYVKTTGNATVDHLSKYLALRIALERRQQQEAGEPGGPGGGASDTGGPDGCGGEGGGAGGGDGPEEPALPSLEGVSEKQYTIYIAPGGGAFTTLNGSLTLELVNEKFWKVSRPLELCYAPTKDPK.

Thr-24 is subject to Phosphothreonine. A necessary for transcriptional repression region spans residues 30–234 (MDGTEIAVSP…GGAGSEDSGD (205 aa)). Ser-38 carries the phosphoserine modification. The segment at 48-88 (CPICLDMLKNTMTTKECLHRFCSDCIVTALRSGNKECPTCR) adopts an RING-type zinc-finger fold. Phosphoserine is present on residues Ser-140, Ser-187, and Ser-190. Disordered stretches follow at residues 148-263 (QAMH…GEIE) and 309-354 (QQQE…PSLE). A compositionally biased stretch (acidic residues) spans 175–187 (EPGEGEGDGEDVS). The Nuclear localization signal signature appears at 201–204 (KRPR). A compositionally biased stretch (gly residues) spans 205–228 (GGGAGGSSVGTGGGGTGGVGGGAG). Phosphothreonine is present on residues Thr-215 and Thr-220. A phosphoserine mark is found at Ser-229 and Ser-232. Residues 230 to 406 (EDSGDRGGTL…LCYAPTKDPK (177 aa)) are necessary for interaction with CBX2. Residues 235 to 244 (RGGTLGGGTL) are compositionally biased toward gly residues. Residues 246-258 (PPSPPGAPSPPEP) show a composition bias toward pro residues. Residues Ser-248 and Ser-254 each carry the phosphoserine modification. Over residues 315–343 (EPGGPGGGASDTGGPDGCGGEGGGAGGGD) the composition is skewed to gly residues.

Component of chromatin-associated Polycomb (PcG) complexes. Interacts with BMI1. Part of the E2F6.com-1 complex in G0 phase composed of E2F6, MGA, MAX, TFDP1, CBX3, BAT8, EUHMTASE1, RING1, RNF2/RING2 MBLR, L3MBTL2 and YAF2. Interacts with CBX2 and PCGF6. Component of a PRC1-like complex. Component of repressive BCOR complex containing Polycomb group subcomplex at least composed of RYBP, PCGF1, BCOR and RNF2/RING2. Interacts with PCGF2, RNF2; CBX6, CBX7 and CBX8. Interacts with PHC2. Interacts with MN1. Interacts with USP26.

It is found in the nucleus. Its subcellular location is the nucleus speckle. It catalyses the reaction S-ubiquitinyl-[E2 ubiquitin-conjugating enzyme]-L-cysteine + [acceptor protein]-L-lysine = [E2 ubiquitin-conjugating enzyme]-L-cysteine + N(6)-ubiquitinyl-[acceptor protein]-L-lysine.. The protein operates within protein modification; protein ubiquitination. Constitutes one of the E3 ubiquitin-protein ligases that mediate monoubiquitination of 'Lys-119' of histone H2A, thereby playing a central role in histone code and gene regulation. H2A 'Lys-119' ubiquitination gives a specific tag for epigenetic transcriptional repression and participates in X chromosome inactivation of female mammals. Essential component of a Polycomb group (PcG) multiprotein PRC1-like complex, a complex class required to maintain the transcriptionally repressive state of many genes, including Hox genes, throughout development. PcG PRC1 complex acts via chromatin remodeling and modification of histones, rendering chromatin heritably changed in its expressibility. Compared to RNF2/RING2, it does not have the main E3 ubiquitin ligase activity on histone H2A, and it may rather act as a modulator of RNF2/RING2 activity. The polypeptide is E3 ubiquitin-protein ligase RING1 (Homo sapiens (Human)).